The primary structure comprises 190 residues: Guanylate kinase (190 aa).

Residues 8-188 form the Guanylate kinase-like domain; the sequence is GRLVILAGPS…AVKAIEDVLL (181 aa). 15–22 contacts ATP; that stretch reads GPSAVGKS.

Belongs to the guanylate kinase family.

It is found in the cytoplasm. It catalyses the reaction GMP + ATP = GDP + ADP. Its function is as follows. Essential for recycling GMP and indirectly, cGMP. The sequence is that of Guanylate kinase from Corynebacterium glutamicum (strain ATCC 13032 / DSM 20300 / JCM 1318 / BCRC 11384 / CCUG 27702 / LMG 3730 / NBRC 12168 / NCIMB 10025 / NRRL B-2784 / 534).